Reading from the N-terminus, the 315-residue chain is Porphobilinogen deaminase (315 aa).

Residue cysteine 245 is modified to S-(dipyrrolylmethanemethyl)cysteine.

The protein belongs to the HMBS family. As to quaternary structure, monomer. Requires dipyrromethane as cofactor.

The enzyme catalyses 4 porphobilinogen + H2O = hydroxymethylbilane + 4 NH4(+). It functions in the pathway porphyrin-containing compound metabolism; protoporphyrin-IX biosynthesis; coproporphyrinogen-III from 5-aminolevulinate: step 2/4. Its pathway is porphyrin-containing compound metabolism; chlorophyll biosynthesis. Tetrapolymerization of the monopyrrole PBG into the hydroxymethylbilane pre-uroporphyrinogen in several discrete steps. The sequence is that of Porphobilinogen deaminase from Prochlorococcus marinus (strain NATL1A).